Here is a 674-residue protein sequence, read N- to C-terminus: Xaa-Pro aminopeptidase 2 (674 aa).

The signal sequence occupies residues 1 to 22 (MAQAYWQCYPWLVLLCACAWSY). N-linked (GlcNAc...) asparagine glycosylation is present at asparagine 65. Arginine 116 is a binding site for substrate. Asparagine 270, asparagine 278, and asparagine 293 each carry an N-linked (GlcNAc...) asparagine glycan. Histidine 430 is a substrate binding site. Zn(2+) contacts are provided by aspartate 450, aspartate 461, and histidine 524. Substrate-binding residues include histidine 524, histidine 533, and glutamate 555. Zn(2+)-binding residues include glutamate 555 and glutamate 569. A lipid anchor (GPI-anchor amidated alanine) is attached at alanine 650. A propeptide spans 651-674 (RAPHIISWTSLWVASALAILSWSS) (removed in mature form).

The protein belongs to the peptidase M24B family. Homotrimer. Zn(2+) is required as a cofactor. N-glycosylated. In terms of tissue distribution, strongly expressed in small intestine, heart and lung. Also detected in testis, skeletal muscle, spleen, liver, kidney, brain, uterus, eye, lymph node, thymus, stomach, prostate and bone marrow.

Its subcellular location is the cell membrane. It carries out the reaction Release of any N-terminal amino acid, including proline, that is linked to proline, even from a dipeptide or tripeptide.. Its function is as follows. Membrane-bound metalloprotease which catalyzes the removal of a penultimate prolyl residue from the N-termini of peptides, such as Arg-Pro-Pro. May play a role in the metabolism of the vasodilator bradykinin. The polypeptide is Xaa-Pro aminopeptidase 2 (Mus musculus (Mouse)).